We begin with the raw amino-acid sequence, 635 residues long: Kelch-like protein 31 (635 aa).

The BTB domain occupies 74–138 (CDLTVATKSK…AYSGKLTLSL (65 aa)). Residues 173-274 (CMYVVNIADT…TPQDLVSHVQ (102 aa)) form the BACK domain. 6 Kelch repeats span residues 318–366 (VLLT…VLDG), 367–420 (FLYV…TFNG), 421–467 (LLFA…VIDG), 469–514 (ILVS…TVGD), 516–566 (AYVL…TLNN), and 567–615 (KIYL…VVTI).

In terms of tissue distribution, strongly expressed in fast skeletal muscle, and weakly in heart. Not expressed in other tissues.

This Danio rerio (Zebrafish) protein is Kelch-like protein 31 (klhl31).